The following is a 4743-amino-acid chain: Apolipoprotein B-100 (4743 aa).

Positions 1–27 (MGPQRPALRAPLLLLFLLLFLDTSVWA) are cleaved as a signal peptide. Residues 29 to 113 (DATRFKHLRK…KNSEEFASAM (85 aa)) are heparin-binding. Residues 33-660 (FKHLRKYVYS…PSSYLPKESM (628 aa)) enclose the Vitellogenin domain. A disulfide bridge links cysteine 65 with cysteine 84. Asparagine 172 carries N-linked (GlcNAc...) asparagine glycosylation. 4 disulfides stabilise this stretch: cysteine 173-cysteine 199, cysteine 232-cysteine 248, cysteine 372-cysteine 377, and cysteine 466-cysteine 501. The heparin-binding stretch occupies residues 219 to 293 (VRPLSTLISS…RFFRGGINQV (75 aa)). Residues 890–947 (NTNFFHESGLEARVALKAGQLKVIIPSPKRPVKLFSGSNTLHLVSTTKTEVIPPLIEN) are heparin-binding. Cysteines 954 and 964 form a disulfide. N-linked (GlcNAc...) asparagine glycosylation is found at asparagine 971, asparagine 1336, asparagine 1345, and asparagine 1491. The residue at position 1973 (lysine 1973) is an N6-acetyllysine. Serine 2006 is subject to Phosphoserine. The interval 2010–2145 (NDAFDEPREF…EKLSQLETYA (136 aa)) is heparin-binding. Asparagine 2094, asparagine 2522, asparagine 2662, asparagine 2741, asparagine 2791, asparagine 2897, asparagine 2944, and asparagine 3063 each carry an N-linked (GlcNAc...) asparagine glycan. The tract at residues 3123–3198 (FLKTTKQSFD…KIKFDKYKTE (76 aa)) is heparin-binding. Residues 3136–3146 (KAQYKKNRDKH) form a basic (possible receptor binding region) region. N-linked (GlcNAc...) asparagine glycosylation is found at asparagine 3186, asparagine 3299, and asparagine 3321. The LDL receptor binding stretch occupies residues 3336–3356 (VTDALQYKLEGTSRLMRKKVL). Residues 3346-3479 (GTSRLMRKKV…QEYSGSVANE (134 aa)) are heparin-binding. Residues 3349-3357 (RLMRKKVLK) form a basic (possible receptor binding region) region. 3 N-linked (GlcNAc...) asparagine glycosylation sites follow: asparagine 3428, asparagine 3715, and asparagine 3828. A Phosphoserine modification is found at serine 3981. Threonine 3985 is modified (phosphothreonine). Residues asparagine 4203 and asparagine 4232 are each glycosylated (N-linked (GlcNAc...) asparagine).

Interacts with PCSK9. Interacts with MTTP. Interacts with AUP1. Interacts with CIDEB. Post-translationally, palmitoylated; structural requirement for proper assembly of the hydrophobic core of the lipoprotein particle. Detected in intestine and liver (at protein level).

It is found in the cytoplasm. Its subcellular location is the secreted. It localises to the lipid droplet. Its function is as follows. Apolipoprotein B is a major protein constituent of chylomicrons (apo B-48), LDL (apo B-100) and VLDL (apo B-100). Apo B-100 functions as a recognition signal for the cellular binding and internalization of LDL particles by the apoB/E receptor. In Rattus norvegicus (Rat), this protein is Apolipoprotein B-100 (Apob).